We begin with the raw amino-acid sequence, 531 residues long: UDP-glucuronosyltransferase 1A6 (531 aa).

Residues 1–26 form the signal peptide; it reads MACLLPAAQTLPAGFLFLVLWASVLG. N-linked (GlcNAc...) asparagine glycosylation is found at Asn-293 and Asn-431. The chain crosses the membrane as a helical span at residues 489–505; the sequence is VIGFLLAIVLTVVFIVF.

This sequence belongs to the UDP-glycosyltransferase family. As to expression, expressed in liver, kidney and at very low levels in colon.

It is found in the microsome. The protein localises to the endoplasmic reticulum membrane. It carries out the reaction glucuronate acceptor + UDP-alpha-D-glucuronate = acceptor beta-D-glucuronoside + UDP + H(+). The catalysed reaction is (5Z,8Z,11Z,14Z)-eicosatetraenoate + UDP-alpha-D-glucuronate = O-[(5Z),(8Z),(11Z),(14Z)-eicosatetraenoyl]-beta-D-glucuronate + UDP. It catalyses the reaction 15-hydroxy-(5Z,8Z,11Z,13E)-eicosatetraenoate + UDP-alpha-D-glucuronate = 15-O-(beta-D-glucuronosyl)-(5Z,8Z,11Z,14Z)-eicosatetraenoate + UDP + H(+). The enzyme catalyses (E)-ferulate + UDP-alpha-D-glucuronate = (E)-4-O-(beta-D-glucuronosyl)-ferulate + UDP + H(+). It carries out the reaction (E)-ferulate + UDP-alpha-D-glucuronate = (E)-ferulic acid beta-D-glucuronate ester + UDP. Functionally, UDP-glucuronosyltransferase (UGT) that catalyzes phase II biotransformation reactions in which lipophilic substrates are conjugated with glucuronic acid to facilitate their inactivation and excretion from the body. Essential for the elimination and detoxification of drugs, xenobiotics and endogenous compounds. Involved in the glucuronidation of arachidonic acid (AA) and AA-derived eicosanoids including 15-HETE and 20-HETE. Conjugates small planar phenolic molecules such as 4-nitrophenol, 1-naphthol, and 4-methylumbelliferone. The bulky phenol 4-hydroxybiphenyl, androgens and estrogens are not substrates. 2-hydroxybiphenyl is an excellent substrate. Involved in the glucuronidation of the phytochemical ferulic acid at the phenolic or the carboxylic acid group. The polypeptide is UDP-glucuronosyltransferase 1A6 (Mus musculus (Mouse)).